The chain runs to 230 residues: Orotidine 5'-phosphate decarboxylase (230 aa).

Substrate is bound by residues Asp11, Lys34, 61 to 70, Thr117, Arg179, Gln188, Gly208, and Arg209; that span reads DLKLHDIPNT. Catalysis depends on Lys63, which acts as the Proton donor.

This sequence belongs to the OMP decarboxylase family. Type 1 subfamily. As to quaternary structure, homodimer.

The enzyme catalyses orotidine 5'-phosphate + H(+) = UMP + CO2. The protein operates within pyrimidine metabolism; UMP biosynthesis via de novo pathway; UMP from orotate: step 2/2. In terms of biological role, catalyzes the decarboxylation of orotidine 5'-monophosphate (OMP) to uridine 5'-monophosphate (UMP). The sequence is that of Orotidine 5'-phosphate decarboxylase from Streptococcus sanguinis (strain SK36).